The primary structure comprises 295 residues: Proline-rich protein 18 (295 aa).

Pro residues predominate over residues 1–13 (MPFPPMPPPPAPA). A disordered region spans residues 1-133 (MPFPPMPPPP…GAGPCPDSAA (133 aa)). The span at 14-29 (PGAQAARQLPRRPCAA) shows a compositional bias: low complexity. The residue at position 47 (Ser-47) is a Phosphoserine. Arg-83 bears the Omega-N-methylarginine mark. Residues 103–126 (ARTTYAATSAGTGTTAAGTSSGAG) are compositionally biased toward low complexity. Residue Arg-172 is modified to Asymmetric dimethylarginine. Positions 181–192 (ARAAGPRRGGPA) are enriched in low complexity. Positions 181 to 227 (ARAAGPRRGGPASDPDAPPTAGQGRRAPPPGAQLLHGGLQVPQLSPR) are disordered. Arg-188 carries the post-translational modification Omega-N-methylarginine.

This chain is Proline-rich protein 18 (PRR18), found in Homo sapiens (Human).